The sequence spans 405 residues: CRS2-associated factor 1, mitochondrial (405 aa).

The transit peptide at 1-20 (MFLIRLSRHNPSSFTLLTRR) directs the protein to the mitochondrion. The tract at residues 32-75 (RDLYNFQSPPPLSSSASENPDFNQKNNNKKKPKPQYRPPSSLEG) is disordered. CRM domains follow at residues 157–255 (ASLT…KRPK) and 277–373 (DGLS…KEDD). The segment at 384–405 (SIDSDVDLSCSRGAQDSPDETT) is disordered.

In terms of assembly, part of large ribonucleo-protein complexes that include group IIB introns.

The protein localises to the mitochondrion. Functionally, may be involved in the splicing of group IIB introns in mitochondria. The protein is CRS2-associated factor 1, mitochondrial of Arabidopsis thaliana (Mouse-ear cress).